Here is a 216-residue protein sequence, read N- to C-terminus: UPF0301 protein BBta_6966 (216 aa).

This sequence belongs to the UPF0301 (AlgH) family.

This is UPF0301 protein BBta_6966 from Bradyrhizobium sp. (strain BTAi1 / ATCC BAA-1182).